Reading from the N-terminus, the 521-residue chain is Bifunctional purine biosynthesis protein PurH (521 aa).

The MGS-like domain maps to 1-145 (MIKQALISVS…KNHRDVTVVV (145 aa)).

The protein belongs to the PurH family.

The enzyme catalyses (6R)-10-formyltetrahydrofolate + 5-amino-1-(5-phospho-beta-D-ribosyl)imidazole-4-carboxamide = 5-formamido-1-(5-phospho-D-ribosyl)imidazole-4-carboxamide + (6S)-5,6,7,8-tetrahydrofolate. It catalyses the reaction IMP + H2O = 5-formamido-1-(5-phospho-D-ribosyl)imidazole-4-carboxamide. Its pathway is purine metabolism; IMP biosynthesis via de novo pathway; 5-formamido-1-(5-phospho-D-ribosyl)imidazole-4-carboxamide from 5-amino-1-(5-phospho-D-ribosyl)imidazole-4-carboxamide (10-formyl THF route): step 1/1. The protein operates within purine metabolism; IMP biosynthesis via de novo pathway; IMP from 5-formamido-1-(5-phospho-D-ribosyl)imidazole-4-carboxamide: step 1/1. This is Bifunctional purine biosynthesis protein PurH from Burkholderia orbicola (strain MC0-3).